Consider the following 187-residue polypeptide: MKVSNLISTITIASALCLSLTNALVFSPCDKIQSLVKEYFDETIVDEMMCIAYNEAINPKSDSIGLWNLKKEHCNTVCKSICNSEIDLADIKLNTQCAEMVYLEFGFNGWDSYNNGLCKDSWGFCNTQNELRQHGSHSSTSRDSSSSSSRDSTGTGYSSSGSGTSGSGSNSGQTGHFIPGQSGHGLN.

Residues 1–23 form the signal peptide; that stretch reads MKVSNLISTITIASALCLSLTNA. Disulfide bonds link C50–C125, C74–C82, and C78–C97. E55 is a catalytic residue. The interval 133-187 is disordered; that stretch reads QHGSHSSTSRDSSSSSSRDSTGTGYSSSGSGTSGSGSNSGQTGHFIPGQSGHGLN. Over residues 136 to 175 the composition is skewed to low complexity; sequence SHSSTSRDSSSSSSRDSTGTGYSSSGSGTSGSGSNSGQTG.

This sequence belongs to the glycosyl hydrolase 22 family.

In Dictyostelium discoideum (Social amoeba), this protein is Lysozyme C-like protein DDB_G0288143.